Reading from the N-terminus, the 353-residue chain is DNA integrity scanning protein DisA (353 aa).

In terms of domain architecture, DAC spans 6–144 (DKELMNILKI…GGIKYVLRDS (139 aa)). Residues G73, L91, and 104 to 108 (TRHRT) contribute to the ATP site.

The protein belongs to the DisA family. In terms of assembly, homooctamer. The cofactor is Mg(2+).

It carries out the reaction 2 ATP = 3',3'-c-di-AMP + 2 diphosphate. In terms of biological role, participates in a DNA-damage check-point that is active prior to asymmetric division when DNA is damaged. DisA forms globular foci that rapidly scan along the chromosomes during sporulation, searching for lesions. When a lesion is present, DisA pauses at the lesion site. This triggers a cellular response that culminates in a temporary block in sporulation initiation. Functionally, also has diadenylate cyclase activity, catalyzing the condensation of 2 ATP molecules into cyclic di-AMP (c-di-AMP). c-di-AMP acts as a signaling molecule that couples DNA integrity with progression of sporulation. The rise in c-di-AMP level generated by DisA while scanning the chromosome, operates as a positive signal that advances sporulation; upon encountering a lesion, the DisA focus arrests at the damaged site and halts c-di-AMP synthesis. The chain is DNA integrity scanning protein DisA from Clostridium botulinum (strain Kyoto / Type A2).